Here is a 539-residue protein sequence, read N- to C-terminus: Cytochrome P450 monooxygenase buaD (539 aa).

The signal sequence occupies residues 1–16 (MLVPVLTLLGTLTATG). Residue N120 is glycosylated (N-linked (GlcNAc...) asparagine). Position 478 (C478) interacts with heme. Residue N520 is glycosylated (N-linked (GlcNAc...) asparagine).

This sequence belongs to the cytochrome P450 family. Heme serves as cofactor.

The protein operates within mycotoxin biosynthesis. In terms of biological role, cytochrome P450 monooxygenase; part of the gene cluster that mediates the biosynthesis of burnettramic acids, an unusual class of bolaamphiphilic pyrrolizidinediones that display potent antibacterial, antifungal, and cytotoxic activities. The first step of the biosynthesis of burnettramic acids is the hydroxylation of proline by the proline hydroxylase buaE to generate 4-hydroxyproline. The PKS-NRPS buaA and trans-enoyl reductase buaC construct the highly reduced polyketide chain, and the condensation (C) domain of buaA then catalyzes the amide bond formation with the activated 4-hydroxyproline. This is followed by the R domain releasing the nascent polyketide-peptide directly via a Dieckmann condensation to afford a tetramic acid fused to the hydroxyproline, generating the bicyclic pyrrolidinedione moiety. The cytochrome P450 monooxygenases buaD and buaG are likely responsible for the multiple hydroxylations on the polyketide chain and its terminus, although in the heterologous context, buaD does not appear to be required. Therefore, while buaG may be a multifunctional cytochrome P450 monooxygenase, it cannot be ruled out that the two secondary alcohols on the polyketide chain could have an acetate origin. Finally, the glycosyltransferase buaB transfers beta-D-mannose to the aglycone burnettramic acid A to form burnettramic acid A. Burnettramic acid B is a minor cis-pyrrolizidine epimer of burnettramic acid A and it is likely that small amounts of it form naturally in acidic environments. The polypeptide is Cytochrome P450 monooxygenase buaD (Petromyces alliaceus (Aspergillus alliaceus)).